Here is a 384-residue protein sequence, read N- to C-terminus: Transcription factor 7 (384 aa).

Residues 1–16 (MPQLDSGGGGAGGGDD) show a composition bias toward gly residues. Positions 1–59 (MPQLDSGGGGAGGGDDLGAPDELLAFQDEGEEQDDKSRDSAAGPERDLAELKSSLVNES) are CTNNB1-binding. Disordered stretches follow at residues 1-88 (MPQL…LGRE), 133-183 (PPSG…QKQV), and 337-384 (SARD…MTVL). The span at 35–50 (DKSRDSAAGPERDLAE) shows a compositional bias: basic and acidic residues. Residues 62 to 78 (AAGGAGIPGVPGAGAGA) are compositionally biased toward gly residues. The segment at residues 269 to 337 (IKKPLNAFML…LHMQLYPGWS (69 aa)) is a DNA-binding region (HMG box). The Nuclear localization signal signature appears at 344–348 (KKKRR). Basic and acidic residues predominate over residues 352–370 (KHQESTTGGKRNAFGTYPE). A compositionally biased stretch (low complexity) spans 374 to 384 (APAPFLPMTVL).

It belongs to the TCF/LEF family. Binds the armadillo repeat of CTNNB1 and forms a stable complex. Interacts with TLE5, TLE1, TLE2, TLE3 and TLE4. Interacts with MLLT11. Long isoform interacts (via N-terminus) with SOX13; inhibits WNT-mediated transcriptional activity. Interacts with DAZAP2. Predominantly expressed in T-cells. Also detected in proliferating intestinal epithelial cells and in the basal epithelial cells of mammary gland epithelium.

The protein localises to the nucleus. Transcriptional activator involved in T-cell lymphocyte differentiation. Necessary for the survival of CD4(+) CD8(+) immature thymocytes. Isoforms lacking the N-terminal CTNNB1 binding domain cannot fulfill this role. Binds to the T-lymphocyte-specific enhancer element (5'-WWCAAAG-3') found in the promoter of the CD3E gene. Represses expression of the T-cell receptor gamma gene in alpha-beta T-cell lineages. Required for the development of natural killer receptor-positive lymphoid tissue inducer T-cells. TLE1, TLE2, TLE3 and TLE4 repress transactivation mediated by TCF7 and CTNNB1. May also act as feedback transcriptional repressor of CTNNB1 and TCF7L2 target genes. This is Transcription factor 7 from Homo sapiens (Human).